The sequence spans 193 residues: Ion-translocating oxidoreductase complex subunit A (193 aa).

The next 6 helical transmembrane spans lie at 5 to 25, 39 to 59, 65 to 85, 102 to 122, 134 to 154, and 171 to 191; these read ILLI…FLGL, IGMG…AYLV, IPLE…AVIV, LLGI…VALL, VLYG…FSAL, and SIAL…TGLV.

The protein belongs to the NqrDE/RnfAE family. In terms of assembly, the complex is composed of six subunits: RnfA, RnfB, RnfC, RnfD, RnfE and RnfG.

It localises to the cell inner membrane. Part of a membrane-bound complex that couples electron transfer with translocation of ions across the membrane. This is Ion-translocating oxidoreductase complex subunit A from Glaesserella parasuis serovar 5 (strain SH0165) (Haemophilus parasuis).